The primary structure comprises 406 residues: S-adenosylmethionine synthase (406 aa).

Histidine 5 contacts ATP. Aspartate 7 contacts Mg(2+). Glutamate 33 lines the K(+) pocket. L-methionine-binding residues include glutamate 46 and glutamine 89. The interval 89–99 (QSPDIAQGVDT) is flexible loop. ATP is bound by residues 164–166 (DGK), 240–241 (KF), aspartate 249, 255–256 (RK), alanine 272, and lysine 276. Aspartate 249 is a binding site for L-methionine. Lysine 280 serves as a coordination point for L-methionine.

This sequence belongs to the AdoMet synthase family. Homotetramer; dimer of dimers. The cofactor is Mg(2+). Requires K(+) as cofactor.

It localises to the cytoplasm. The enzyme catalyses L-methionine + ATP + H2O = S-adenosyl-L-methionine + phosphate + diphosphate. It functions in the pathway amino-acid biosynthesis; S-adenosyl-L-methionine biosynthesis; S-adenosyl-L-methionine from L-methionine: step 1/1. In terms of biological role, catalyzes the formation of S-adenosylmethionine (AdoMet) from methionine and ATP. The overall synthetic reaction is composed of two sequential steps, AdoMet formation and the subsequent tripolyphosphate hydrolysis which occurs prior to release of AdoMet from the enzyme. This chain is S-adenosylmethionine synthase, found in Synechococcus sp. (strain ATCC 27144 / PCC 6301 / SAUG 1402/1) (Anacystis nidulans).